Here is a 461-residue protein sequence, read N- to C-terminus: Aspartic proteinase NANA, chloroplast (461 aa).

N-linked (GlcNAc...) asparagine glycosylation is present at N86. Positions 106–456 (YFTEIRVGTP…DLMASTLSFA (351 aa)) constitute a Peptidase A1 domain. D124 is an active-site residue. N274 carries N-linked (GlcNAc...) asparagine glycosylation. Residue D338 is part of the active site. N386 carries an N-linked (GlcNAc...) asparagine glycan.

This sequence belongs to the peptidase A1 family.

It localises to the plastid. Its subcellular location is the chloroplast. Its activity is regulated as follows. Repressed by pepstatin A. Its function is as follows. Aspartic proteinase that can use azocasein as substrate and regulates endogenous sugar levels (e.g. sucrose, glucose and fructose) by modulating starch accumulation and remobilization. Influences general morphology and development. This is Aspartic proteinase NANA, chloroplast from Arabidopsis thaliana (Mouse-ear cress).